Here is a 527-residue protein sequence, read N- to C-terminus: GMP synthase [glutamine-hydrolyzing] (527 aa).

One can recognise a Glutamine amidotransferase type-1 domain in the interval 4–202; the sequence is KILILDFGSQ…VLKICGAKPD (199 aa). The active-site Nucleophile is the Cys81. Residues His176 and Glu178 contribute to the active site. The GMPS ATP-PPase domain occupies 203-395; that stretch reads WEMGNYIDEA…LGLPPSMVYR (193 aa). 230–236 contacts ATP; that stretch reads SGGVDSS.

Homodimer.

The enzyme catalyses XMP + L-glutamine + ATP + H2O = GMP + L-glutamate + AMP + diphosphate + 2 H(+). It functions in the pathway purine metabolism; GMP biosynthesis; GMP from XMP (L-Gln route): step 1/1. In terms of biological role, catalyzes the synthesis of GMP from XMP. The polypeptide is GMP synthase [glutamine-hydrolyzing] (Paraburkholderia phymatum (strain DSM 17167 / CIP 108236 / LMG 21445 / STM815) (Burkholderia phymatum)).